Reading from the N-terminus, the 430-residue chain is Histidinol dehydrogenase (430 aa).

Positions 124, 185, and 208 each coordinate NAD(+). Ser233, Gln255, and His258 together coordinate substrate. Zn(2+) is bound by residues Gln255 and His258. Residues Glu324 and His325 each act as proton acceptor in the active site. Residues His325, Asp358, Glu412, and His418 each contribute to the substrate site. Asp358 contributes to the Zn(2+) binding site. A Zn(2+)-binding site is contributed by His418.

This sequence belongs to the histidinol dehydrogenase family. Zn(2+) serves as cofactor.

The catalysed reaction is L-histidinol + 2 NAD(+) + H2O = L-histidine + 2 NADH + 3 H(+). It participates in amino-acid biosynthesis; L-histidine biosynthesis; L-histidine from 5-phospho-alpha-D-ribose 1-diphosphate: step 9/9. Functionally, catalyzes the sequential NAD-dependent oxidations of L-histidinol to L-histidinaldehyde and then to L-histidine. The protein is Histidinol dehydrogenase of Leptospira biflexa serovar Patoc (strain Patoc 1 / Ames).